We begin with the raw amino-acid sequence, 616 residues long: Glycogenin-1 (616 aa).

UDP contacts are provided by L10, Y16, and R95. L10, Y16, R95, K104, D120, D122, N158, S159, D185, D188, and Q189 together coordinate UDP-alpha-D-glucose. D120 and D122 together coordinate UDP. Residues D120 and D122 each contribute to the Mn(2+) site. Residue Y230 is glycosylated (O-linked (Glc...) tyrosine). Residues H247, G250, and K253 each coordinate UDP. Residue H247 participates in Mn(2+) binding. Residues G250 and K253 each contribute to the UDP-alpha-D-glucose site. Over residues 283-302 the composition is skewed to basic and acidic residues; the sequence is HQLNNEVSKPKISDSDKTET. Disordered stretches follow at residues 283–320, 335–354, 371–525, and 553–588; these read HQLN…PTTN, NQNA…NPVP, TNQP…EKDK, and RDAT…EMPN. A compositionally biased stretch (basic and acidic residues) spans 377–386; sequence ESREYSKEND. Residues 400–419 are compositionally biased toward polar residues; sequence SPPNSTQELNSSYSVVSTQA. Residues 450–461 show a composition bias toward low complexity; sequence STAASSNNNVSN. Polar residues-rich tracts occupy residues 462–485 and 492–503; these read QPDG…PSNP and DNIQKPSVSTND. Residues 567–576 show a composition bias toward basic and acidic residues; it reads DKQEDMKLTA. Residues 577 to 586 are compositionally biased toward polar residues; sequence EETNQPQQEM. The O-linked (Glc...) tyrosine glycan is linked to Y598.

Belongs to the glycosyltransferase 8 family. Glycogenin subfamily. The cofactor is Mn(2+).

The protein localises to the cytoplasm. Its subcellular location is the vacuole. It carries out the reaction L-tyrosyl-[glycogenin] + UDP-alpha-D-glucose = alpha-D-glucosyl-L-tyrosyl-[glycogenin] + UDP + H(+). The enzyme catalyses [1,4-alpha-D-glucosyl](n)-L-tyrosyl-[glycogenin] + UDP-alpha-D-glucose = [1,4-alpha-D-glucosyl](n+1)-L-tyrosyl-[glycogenin] + UDP + H(+). Functionally, self-glucosylating initiator of glycogen synthesis. It catalyzes the formation of a short alpha (1,4)-glucosyl chain covalently attached via a glucose 1-O-tyrosyl linkage to internal tyrosine residues and these chains act as primers for the elongation reaction catalyzed by glycogen synthase. Capable of transferring glucosyl residues to unbound acceptors such as free oligoglucans or oligoglucan derivatives. This chain is Glycogenin-1, found in Saccharomyces cerevisiae (strain ATCC 204508 / S288c) (Baker's yeast).